The following is a 61-amino-acid chain: Alpha-conotoxin CnIJ (61 aa).

Positions 1–17 (MMFTVFLLVVLTTTVVS) are cleaved as a signal peptide. The propeptide occupies 18–44 (FPSDSASDGRDDEAKDERSDMYELKRN). Cystine bridges form between cysteine 47–cysteine 52 and cysteine 48–cysteine 59. Cysteine amide is present on cysteine 59.

The protein belongs to the conotoxin A superfamily. Expressed by the venom duct.

It is found in the secreted. The chain is Alpha-conotoxin CnIJ from Conus consors (Singed cone).